The sequence spans 489 residues: 2-(3-amino-3-carboxypropyl)histidine synthase subunit 2 (489 aa).

At Met1 the chain carries N-acetylmethionine. Position 7 is a phosphoserine (Ser7). Positions 89, 110, and 341 each coordinate [4Fe-4S] cluster. Phosphothreonine is present on Thr435. Ser446 and Ser456 each carry phosphoserine. Thr467 is modified (phosphothreonine). Ser488 is modified (phosphoserine).

The protein belongs to the DPH1/DPH2 family. DPH2 subfamily. Component of the 2-(3-amino-3-carboxypropyl)histidine synthase complex composed of DPH1, DPH2, DPH3 and a NADH-dependent reductase. Interacts with DPH1. [4Fe-4S] cluster serves as cofactor. As to expression, strongly expressed in skeletal muscle. Moderately expressed in heart, small intestine, liver, pancreas, testis and colon. Weakly expressed in brain, placenta, kidney, spleen, thymus, prostate, ovary and lymphocytes.

It participates in protein modification; peptidyl-diphthamide biosynthesis. Functionally, required for the first step of diphthamide biosynthesis, a post-translational modification of histidine which occurs in elongation factor 2. DPH1 and DPH2 transfer a 3-amino-3-carboxypropyl (ACP) group from S-adenosyl-L-methionine (SAM) to a histidine residue, the reaction is assisted by a reduction system comprising DPH3 and a NADH-dependent reductase. Facilitates the reduction of the catalytic iron-sulfur cluster found in the DPH1 subunit. The protein is 2-(3-amino-3-carboxypropyl)histidine synthase subunit 2 (DPH2) of Homo sapiens (Human).